The sequence spans 715 residues: Phosphoribosylformylglycinamidine synthase subunit PurL (715 aa).

His33 is an active-site residue. Tyr36 lines the ATP pocket. Position 77 (Glu77) interacts with Mg(2+). Substrate is bound by residues 78 to 81 (SHNH) and Arg100. The Proton acceptor role is filled by His79. Asp101 is a binding site for Mg(2+). Gln225 contacts substrate. Asp253 lines the Mg(2+) pocket. Substrate is bound at residue 297–299 (ESQ). The ATP site is built by Asn476 and Gly513. Asn514 serves as a coordination point for Mg(2+). Residue Ser516 participates in substrate binding.

Belongs to the FGAMS family. Monomer. Part of the FGAM synthase complex composed of 1 PurL, 1 PurQ and 2 PurS subunits.

Its subcellular location is the cytoplasm. The enzyme catalyses N(2)-formyl-N(1)-(5-phospho-beta-D-ribosyl)glycinamide + L-glutamine + ATP + H2O = 2-formamido-N(1)-(5-O-phospho-beta-D-ribosyl)acetamidine + L-glutamate + ADP + phosphate + H(+). Its pathway is purine metabolism; IMP biosynthesis via de novo pathway; 5-amino-1-(5-phospho-D-ribosyl)imidazole from N(2)-formyl-N(1)-(5-phospho-D-ribosyl)glycinamide: step 1/2. Part of the phosphoribosylformylglycinamidine synthase complex involved in the purines biosynthetic pathway. Catalyzes the ATP-dependent conversion of formylglycinamide ribonucleotide (FGAR) and glutamine to yield formylglycinamidine ribonucleotide (FGAM) and glutamate. The FGAM synthase complex is composed of three subunits. PurQ produces an ammonia molecule by converting glutamine to glutamate. PurL transfers the ammonia molecule to FGAR to form FGAM in an ATP-dependent manner. PurS interacts with PurQ and PurL and is thought to assist in the transfer of the ammonia molecule from PurQ to PurL. The sequence is that of Phosphoribosylformylglycinamidine synthase subunit PurL from Methanosarcina barkeri (strain Fusaro / DSM 804).